The sequence spans 347 residues: Phenylalanine--tRNA ligase alpha subunit (347 aa).

Glutamate 261 serves as a coordination point for Mg(2+).

The protein belongs to the class-II aminoacyl-tRNA synthetase family. Phe-tRNA synthetase alpha subunit type 1 subfamily. In terms of assembly, tetramer of two alpha and two beta subunits. Mg(2+) is required as a cofactor.

It is found in the cytoplasm. It carries out the reaction tRNA(Phe) + L-phenylalanine + ATP = L-phenylalanyl-tRNA(Phe) + AMP + diphosphate + H(+). The polypeptide is Phenylalanine--tRNA ligase alpha subunit (Streptococcus equi subsp. equi (strain 4047)).